A 156-amino-acid chain; its full sequence is Succinate dehydrogenase assembly factor 2-B, mitochondrial (156 aa).

A mitochondrion-targeting transit peptide spans 1–24 (MLRQFIISTVGRRQPLLMILQSRL).

This sequence belongs to the SDHAF2 family. As to quaternary structure, interacts with the flavoprotein subunit within the SDH catalytic dimer.

It is found in the mitochondrion matrix. Plays an essential role in the assembly of succinate dehydrogenase (SDH), an enzyme complex (also referred to as respiratory complex II) that is a component of both the tricarboxylic acid (TCA) cycle and the mitochondrial electron transport chain, and which couples the oxidation of succinate to fumarate with the reduction of ubiquinone (coenzyme Q) to ubiquinol. Required for flavinylation (covalent attachment of FAD) of the flavoprotein subunit of the SDH catalytic dimer. The polypeptide is Succinate dehydrogenase assembly factor 2-B, mitochondrial (Drosophila yakuba (Fruit fly)).